A 1562-amino-acid chain; its full sequence is E3 ubiquitin-protein ligase listerin (1562 aa).

HEAT repeat units follow at residues Ser-41–Gln-78, Lys-127–Ala-164, Glu-175–Leu-217, Glu-262–Lys-301, Leu-304–Thr-348, Ser-495–Ser-532, Ser-555–Ser-592, Ile-813–Cys-850, Tyr-908–Arg-945, Phe-997–Ser-1037, Thr-1047–Ser-1085, Ile-1188–Asp-1226, Asn-1263–Gly-1298, and Leu-1299–Pro-1339. The segment at Cys-1508–Arg-1555 adopts an RING-type zinc-finger fold.

It belongs to the LTN1 family. Component of the ribosome quality control complex (RQC), composed of the E3 ubiquitin ligase RKR1/LTN1, RQC1 and RQC2, as well as CDC48 and its ubiquitin-binding cofactors associated with the 60S ribosomal subunits.

Its subcellular location is the nucleus. The protein localises to the cytoplasm. The protein resides in the cytosol. The enzyme catalyses S-ubiquitinyl-[E2 ubiquitin-conjugating enzyme]-L-cysteine + [acceptor protein]-L-lysine = [E2 ubiquitin-conjugating enzyme]-L-cysteine + N(6)-ubiquitinyl-[acceptor protein]-L-lysine.. It functions in the pathway protein modification; protein ubiquitination. Functionally, E3 ubiquitin-protein ligase component of the ribosome quality control complex (RQC), a ribosome-associated complex that mediates ubiquitination and extraction of incompletely synthesized nascent chains for proteasomal degradation. Mediates ubiquitination of proteins derived from mRNAs lacking stop codons (non-stop proteins) and other translation arrest products induced by poly-lysine sequences and tandem rare codons. Ubiquitination leads to CDC48 recruitment for extraction and degradation of the incomplete translation product. May indirectly play a role in chromatin function and transcription. The chain is E3 ubiquitin-protein ligase listerin from Saccharomyces cerevisiae (strain ATCC 204508 / S288c) (Baker's yeast).